Reading from the N-terminus, the 218-residue chain is Copper acquisition factor BIM1 (218 aa).

Residues 1–19 form the signal peptide; that stretch reads MFALKSILVTSLITSTALA. Cu(2+)-binding residues include histidine 20 and histidine 65. Asparagine 87, asparagine 91, and asparagine 124 each carry an N-linked (GlcNAc...) asparagine glycan. Aspartate 138 provides a ligand contact to Cu(2+). N-linked (GlcNAc...) asparagine glycosylation is found at asparagine 158 and asparagine 170. Residues 160–194 form a disordered region; that stretch reads TCTNDASKASNATSTSSGSATATSAAATSSSSGTS. The segment covering 165–194 has biased composition (low complexity); that stretch reads ASKASNATSTSSGSATATSAAATSSSSGTS. Serine 190 is lipidated: GPI-anchor amidated serine. A propeptide spans 191 to 218 (removed in mature form); sequence SGTSGAIKEVVGFGALSLALGIAGLIIL.

The protein belongs to the X325 family. Interacts with the CUF1-dependent copper transporter CTR1. It depends on Cu(2+) as a cofactor.

The protein localises to the cell membrane. In terms of biological role, lytic polysaccharide monooxygenase-like protein that has diverged to biological functions other than polysaccharide degradation since it does not perform oxidative cleavage of polysaccharides. Cell surface-bound protein that functions in the copper-accumulation pathway shared by the CUF1-dependent copper transporter CTR1. Involved in maintaining cell wall integrity during copper deficiency. Binds Cu(2+) with an estimated 1:1 stoichiometry and might serve as an extracellular copper ligand. FRE4 and FRE7 metalloreductases probably function together with CTR1 and BIM1 to liberate the Cu(2+) bound to the BIM1 copper-binding site for subsequent import of Cu(+) into the cell by CTR1, via the reduction of BIM1-bound Cu(2+) to Cu(+) to reduce binding affinity for BIM1 but increase affinity for CTR1. Facilitates copper acquisition in the brain of mammalian hosts and acts as a copper-dependent virulence trait in fungal meningitis. While BIM1 plays a critical role in cryptococcal meningitis, at least in part through its role in copper acquisition, it could play additional roles during copper limitation or as a means to invade and colonize host tissues in the brain, by compromising host carbohydrate integrity via its lytic polysaccharide monooxygenase (LPMO) activity, which has still to be determined. The protein is Copper acquisition factor BIM1 of Cryptococcus neoformans var. grubii serotype A (strain H99 / ATCC 208821 / CBS 10515 / FGSC 9487) (Filobasidiella neoformans var. grubii).